Here is a 427-residue protein sequence, read N- to C-terminus: Protein TIFY 6a (427 aa).

Basic and acidic residues predominate over residues 1-25 (MERDFLGAIWRKEEAAGKPEEHSDY). Disordered regions lie at residues 1–32 (MERDFLGAIWRKEEAAGKPEEHSDYRGGGGGA) and 128–154 (YGVAAPHHFPSPSPSPRHPVPFGHANP). Pro residues predominate over residues 136 to 146 (FPSPSPSPRHP). A Tify domain is found at 196 to 231 (QNPKVTQMTIFYDGLVNVFDNIPVEKAQELMLLASR). The interval 296 to 327 (SFSSSNDSAGPKSGGLPLAVTPLSQASPSQPI) is disordered. Residues 317-327 (PLSQASPSQPI) show a composition bias toward polar residues. The short motif at 343–367 (PQARKASLARFLEKRKERVSSVAPY) is the Jas element. The short motif at 345 to 352 (ARKASLAR) is the Nuclear localization signal element. The segment at 361–427 (VSSVAPYPSS…QEPPSTKLQI (67 aa)) is disordered. 2 stretches are compositionally biased toward polar residues: residues 369–402 (SSKSPLESSDTIGSPSTPSKSSCTDITPSTNNCE) and 411–427 (RNISFSSQEPPSTKLQI).

The protein belongs to the TIFY/JAZ family. In terms of assembly, interacts with COI1A. Interacts with COI1A and COI1B in a coronatine-dependent manner. Coronatine is an analog of jasmonoyl isoleucine (JA-Ile). Post-translationally, ubiquitinated. Targeted for degradation by the SCF(COI1) E3 ubiquitin ligase-proteasome pathway during jasmonate signaling.

It is found in the nucleus. In terms of biological role, repressor of jasmonate responses. This is Protein TIFY 6a from Oryza sativa subsp. japonica (Rice).